The primary structure comprises 173 residues: NADH-ubiquinone oxidoreductase chain 6 (173 aa).

Transmembrane regions (helical) follow at residues 1-21, 27-47, 48-68, 87-107, 113-133, and 139-159; these read MTYFVLFLGLCFVLGGLAVAS, YGVVGLVLASIAGCGWLLSLG, VSFVSLVLFMVYLGGMLVVFV, VVGYGVSLITVLVVGVVVGGF, FGVITVDSVGMFSVRLDFGGV, and CGVGMFLVAGWGLLLTLFVVL.

Belongs to the complex I subunit 6 family.

The protein localises to the mitochondrion membrane. It carries out the reaction a ubiquinone + NADH + 5 H(+)(in) = a ubiquinol + NAD(+) + 4 H(+)(out). In terms of biological role, core subunit of the mitochondrial membrane respiratory chain NADH dehydrogenase (Complex I) that is believed to belong to the minimal assembly required for catalysis. Complex I functions in the transfer of electrons from NADH to the respiratory chain. The immediate electron acceptor for the enzyme is believed to be ubiquinone. The chain is NADH-ubiquinone oxidoreductase chain 6 (MT-ND6) from Alle alle (Dovekie).